We begin with the raw amino-acid sequence, 621 residues long: DNA mismatch repair protein MutL (621 aa).

Belongs to the DNA mismatch repair MutL/HexB family.

Its function is as follows. This protein is involved in the repair of mismatches in DNA. It is required for dam-dependent methyl-directed DNA mismatch repair. May act as a 'molecular matchmaker', a protein that promotes the formation of a stable complex between two or more DNA-binding proteins in an ATP-dependent manner without itself being part of a final effector complex. This Xylella fastidiosa (strain M12) protein is DNA mismatch repair protein MutL.